The primary structure comprises 415 residues: Peptide chain release factor subunit 1 (415 aa).

It belongs to the eukaryotic release factor 1 family. In terms of assembly, heterodimer of two subunits, one of which binds GTP.

Its subcellular location is the cytoplasm. Directs the termination of nascent peptide synthesis (translation) in response to the termination codons UAA, UAG and UGA. In Thermococcus onnurineus (strain NA1), this protein is Peptide chain release factor subunit 1.